Here is a 377-residue protein sequence, read N- to C-terminus: Succinyl-diaminopimelate desuccinylase (377 aa).

His67 is a Zn(2+) binding site. Asp69 is an active-site residue. Asp100 serves as a coordination point for Zn(2+). The active-site Proton acceptor is Glu134. Residues Glu135, Glu163, and His349 each coordinate Zn(2+).

Belongs to the peptidase M20A family. DapE subfamily. Homodimer. Zn(2+) serves as cofactor. The cofactor is Co(2+).

It carries out the reaction N-succinyl-(2S,6S)-2,6-diaminopimelate + H2O = (2S,6S)-2,6-diaminopimelate + succinate. It functions in the pathway amino-acid biosynthesis; L-lysine biosynthesis via DAP pathway; LL-2,6-diaminopimelate from (S)-tetrahydrodipicolinate (succinylase route): step 3/3. In terms of biological role, catalyzes the hydrolysis of N-succinyl-L,L-diaminopimelic acid (SDAP), forming succinate and LL-2,6-diaminopimelate (DAP), an intermediate involved in the bacterial biosynthesis of lysine and meso-diaminopimelic acid, an essential component of bacterial cell walls. In Haemophilus influenzae (strain PittEE), this protein is Succinyl-diaminopimelate desuccinylase.